We begin with the raw amino-acid sequence, 1240 residues long: DNA-directed RNA polymerase subunit beta (1240 aa).

Belongs to the RNA polymerase beta chain family. The RNAP catalytic core consists of 2 alpha, 1 beta, 1 beta' and 1 omega subunit. When a sigma factor is associated with the core the holoenzyme is formed, which can initiate transcription.

The catalysed reaction is RNA(n) + a ribonucleoside 5'-triphosphate = RNA(n+1) + diphosphate. DNA-dependent RNA polymerase catalyzes the transcription of DNA into RNA using the four ribonucleoside triphosphates as substrates. In Phytoplasma australiense, this protein is DNA-directed RNA polymerase subunit beta.